We begin with the raw amino-acid sequence, 572 residues long: MVRKYGIFIDAGSSGSRLLIYSWDYDTDSSLSDKVKKLPLIETGIGDGGKWSLKVQPGISSFANNPKHVGKKHLKELLDFAAHAIPKDVHKETPVFLSATAGMRLLGVDAQNKILSHACRYIKKNYDFDIPNCSNSIRVIDGKAEGMYGWLATNYLLKTLEEKDTSTVGFLDMGGASVQIAFELPPSQLKNYKDSISTVHIGLQNGQQLEYPLFVTTWLGFGANEAYRRYLGLLIESENGKVGNTLSDPCSLRGRTYDIDGIEFAGTGDLKQCLKLTYNLLNKDKPCSMDPCNFDGISIPPVDFANTEFVGVSEFWYTTNDVFDMGGSYHFPNFYKKVDEYCGTEWETMLSRLYNKELTPSTDENKLEKLCFKASWALNVLHEGFDVPKSNTSSNDAKDGLSVIPAYHSPFTSLEKIERTEVSWTLGQVLLYASNQQLLAKPEYANYYMDPYGKLIASPSKHWMRLFPNKLFFILSFIFCLFFLFSLVLFGYDPKRRQRFKKFLLRLQRRKAPYIMSANGSYEDIADFSDDLEMSSPSKWHGPPIRTTSSHVLADRLSFTASRERTPRSPFP.

Residues 1–470 (MVRKYGIFID…KHWMRLFPNK (470 aa)) lie on the Lumenal side of the membrane. E145 functions as the Proton acceptor in the catalytic mechanism. A helical membrane pass occupies residues 471 to 491 (LFFILSFIFCLFFLFSLVLFG). Over 492-572 (YDPKRRQRFK…RERTPRSPFP (81 aa)) the chain is Cytoplasmic.

This sequence belongs to the GDA1/CD39 NTPase family. Ca(2+) is required as a cofactor. It depends on Mg(2+) as a cofactor. The cofactor is Mn(2+).

It is found in the golgi apparatus. It localises to the membrane. The enzyme catalyses a ribonucleoside 5'-triphosphate + 2 H2O = a ribonucleoside 5'-phosphate + 2 phosphate + 2 H(+). It participates in protein modification; protein glycosylation. Functionally, catalyzes the hydrolysis of phosphoanhydride bonds of nucleoside tri- and di-phosphates. Required for Golgi glycosylation and cell wall integrity. Involved in N-mannosylation of proteins in Golgi. In Schizosaccharomyces pombe (strain 972 / ATCC 24843) (Fission yeast), this protein is Golgi apyrase.